The following is a 48-amino-acid chain: Small ribosomal subunit protein uS14 (48 aa).

Residues C13, C16, C31, and C34 each coordinate Zn(2+).

This sequence belongs to the universal ribosomal protein uS14 family. Zinc-binding uS14 subfamily. As to quaternary structure, part of the 30S ribosomal subunit. Zn(2+) is required as a cofactor.

Functionally, binds 16S rRNA, required for the assembly of 30S particles. This Methanopyrus kandleri (strain AV19 / DSM 6324 / JCM 9639 / NBRC 100938) protein is Small ribosomal subunit protein uS14.